A 1337-amino-acid chain; its full sequence is Aldehyde oxidase 4 (1337 aa).

The 2Fe-2S ferredoxin-type domain occupies 4-91 (DDLVFAVNGE…GCSITTSDGL (88 aa)). [2Fe-2S] cluster is bound by residues Cys43, Cys48, Cys51, Cys73, Cys113, Cys116, Cys155, and Cys157. In terms of domain architecture, FAD-binding PCMH-type spans 225–409 (LDQTRYHWST…LKVHIPRWIA (185 aa)). FAD-binding positions include 259 to 266 (LVVGNTGT), 342 to 346 (SIGGN), Asp358, and Leu399. Positions 771, 802, and 915 each coordinate Mo-molybdopterin. Glu1265 (proton acceptor) is an active-site residue.

It belongs to the xanthine dehydrogenase family. Aldehyde oxidases (AO) are homodimers and heterodimers of AO subunits. Requires [2Fe-2S] cluster as cofactor. It depends on FAD as a cofactor. Mo-molybdopterin serves as cofactor. Transcripts expressed at high levels in developing siliques and at low levels in dry seeds.

Its subcellular location is the cytoplasm. It catalyses the reaction indole-3-acetaldehyde + O2 + H2O = (indol-3-yl)acetate + H2O2 + H(+). The enzyme catalyses an aldehyde + O2 + H2O = a carboxylate + H2O2 + H(+). It carries out the reaction benzaldehyde + O2 + H2O = benzoate + H2O2 + H(+). The catalysed reaction is hexanal + O2 + H2O = hexanoate + H2O2 + H(+). It catalyses the reaction 1-naphthaldehyde + O2 + H2O = 1-naphthoate + H2O2 + H(+). The enzyme catalyses vanillin + O2 + H2O = vanillate + H2O2 + H(+). It carries out the reaction malonaldehyde + O2 + H2O = 3-oxopropanoate + H2O2 + H(+). The catalysed reaction is citral + O2 + H2O = 3,7-dimethylocta-2,6-dienoate + H2O2 + H(+). It catalyses the reaction acrolein + O2 + H2O = acrylate + H2O2 + H(+). The enzyme catalyses (E)-4-hydroxynon-2-enal + O2 + H2O = (E)-4-hydroxynon-2-enoate + H2O2 + H(+). It carries out the reaction (E)-cinnamaldehyde + O2 + H2O = (E)-cinnamate + H2O2 + H(+). The catalysed reaction is indole-3-carbaldehyde + O2 + H2O = indole-3-carboxylate + H2O2 + H(+). It catalyses the reaction propanal + O2 + H2O = propanoate + H2O2 + H(+). The enzyme catalyses dodecanal + O2 + H2O = dodecanoate + H2O2 + H(+). It carries out the reaction salicylaldehyde + O2 + H2O = salicylate + H2O2 + H(+). Inhibited by Cu(2+). Functionally, aldehyde oxidase with a broad substrate specificity. Involved in the accumulation of benzoic acid (BA) in siliques. Delays and protects siliques from senescence by catalyzing aldehyde detoxification in siliques. Catalyzes the oxidation of an array of aromatic and aliphatic aldehydes, including vanillin and the reactive carbonyl species (RCS) acrolein, 4-hydroxyl-2-nonenal (HNE), and malondialdehyde (MDA). This Arabidopsis thaliana (Mouse-ear cress) protein is Aldehyde oxidase 4.